The following is a 368-amino-acid chain: Polymerase delta-interacting protein 2 (368 aa).

The N-terminal 21 residues, 1–21 (MAGCVARRALAVGSRWWSRSL), are a transit peptide targeting the mitochondrion. One can recognise an ApaG domain in the interval 235-360 (RETTENIRVT…FSLESNKDEK (126 aa)). Threonine 292 is modified (phosphothreonine).

Interacts with PCNA and POLD2. Interacts with SSBP1. Interacts with PRIMPOL; leading to enhance DNA polymerase activity of PRIMPOL. Interacts with POLH. Interacts with POLD1; leading to stimulate DNA polymerase activity of POLD1.

The protein resides in the mitochondrion matrix. It localises to the nucleus. Functionally, involved in DNA damage tolerance by regulating translesion synthesis (TLS) of templates carrying DNA damage lesions such as 8oxoG and abasic sites. May act by stimulating activity of DNA polymerases involved in TLS, such as PRIMPOL and polymerase delta (POLD1). This is Polymerase delta-interacting protein 2 from Mus musculus (Mouse).